We begin with the raw amino-acid sequence, 269 residues long: Signal recognition particle receptor subunit beta (269 aa).

A helical membrane pass occupies residues 35–55 (LLSVAVALLAVLLTLVFWKFI). GTP contacts are provided by residues 69 to 77 (GLCDSGKTL) and 90 to 93 (TQTS). At Ser-110 the chain carries Phosphoserine. GTP is bound by residues Gly-118 and 178–181 (NKQD). Thr-212 is modified (phosphothreonine). Ala-246 contributes to the GTP binding site.

This sequence belongs to the SRP receptor beta subunit family. Heterodimer with SRPRA.

Its subcellular location is the endoplasmic reticulum membrane. Its function is as follows. Component of the SRP (signal recognition particle) receptor. Ensures, in conjunction with the signal recognition particle, the correct targeting of the nascent secretory proteins to the endoplasmic reticulum membrane system. May mediate the membrane association of SR. The protein is Signal recognition particle receptor subunit beta (Srprb) of Mus musculus (Mouse).